Here is a 475-residue protein sequence, read N- to C-terminus: Ribulose bisphosphate carboxylase large chain (475 aa).

A propeptide spanning residues Met1–Ser2 is cleaved from the precursor. At Pro3 the chain carries N-acetylproline. N6,N6,N6-trimethyllysine is present on Lys14. Residues Asn123 and Thr173 each coordinate substrate. The active-site Proton acceptor is the Lys175. Lys177 lines the substrate pocket. Mg(2+) contacts are provided by Lys201, Asp203, and Glu204. An N6-carboxylysine modification is found at Lys201. Catalysis depends on His294, which acts as the Proton acceptor. Residues Arg295, His327, and Ser379 each contribute to the substrate site.

It belongs to the RuBisCO large chain family. Type I subfamily. Heterohexadecamer of 8 large chains and 8 small chains; disulfide-linked. The disulfide link is formed within the large subunit homodimers. Mg(2+) is required as a cofactor. The disulfide bond which can form in the large chain dimeric partners within the hexadecamer appears to be associated with oxidative stress and protein turnover.

It is found in the plastid. It localises to the chloroplast. The enzyme catalyses 2 (2R)-3-phosphoglycerate + 2 H(+) = D-ribulose 1,5-bisphosphate + CO2 + H2O. It catalyses the reaction D-ribulose 1,5-bisphosphate + O2 = 2-phosphoglycolate + (2R)-3-phosphoglycerate + 2 H(+). In terms of biological role, ruBisCO catalyzes two reactions: the carboxylation of D-ribulose 1,5-bisphosphate, the primary event in carbon dioxide fixation, as well as the oxidative fragmentation of the pentose substrate in the photorespiration process. Both reactions occur simultaneously and in competition at the same active site. This chain is Ribulose bisphosphate carboxylase large chain, found in Tsuga heterophylla (Western hemlock).